Reading from the N-terminus, the 135-residue chain is Crustacean hyperglycemic hormones A* (135 aa).

An N-terminal signal peptide occupies residues 1–26 (MVSFRTMWSVVVVVVVASLASSGVQG). At Q62 the chain carries Pyrrolidone carboxylic acid. 3 cysteine pairs are disulfide-bonded: C68–C104, C84–C100, and C87–C113. V133 is subject to Valine amide.

Belongs to the arthropod CHH/MIH/GIH/VIH hormone family. In terms of tissue distribution, produced by the medulla terminalis X-organ in the eyestalks and transported to the sinus gland where they are stored and released.

Its subcellular location is the secreted. In terms of biological role, hormone found in the sinus gland of isopods and decapods which controls the blood sugar level. Has a secretagogue action over the amylase released from the midgut gland. May act as a stress hormone and may be involved in the control of molting and reproduction. In Faxonius limosus (Spinycheek crayfish), this protein is Crustacean hyperglycemic hormones A* (CHHA*).